We begin with the raw amino-acid sequence, 306 residues long: Porphobilinogen deaminase (306 aa).

At C240 the chain carries S-(dipyrrolylmethanemethyl)cysteine.

It belongs to the HMBS family. Monomer. Dipyrromethane serves as cofactor.

It catalyses the reaction 4 porphobilinogen + H2O = hydroxymethylbilane + 4 NH4(+). The protein operates within porphyrin-containing compound metabolism; protoporphyrin-IX biosynthesis; coproporphyrinogen-III from 5-aminolevulinate: step 2/4. Tetrapolymerization of the monopyrrole PBG into the hydroxymethylbilane pre-uroporphyrinogen in several discrete steps. The protein is Porphobilinogen deaminase of Syntrophomonas wolfei subsp. wolfei (strain DSM 2245B / Goettingen).